Here is a 744-residue protein sequence, read N- to C-terminus: MSLFRLVEWVSQTIPNTSTILNASFFQDREQLVIGGENGQITISDPGFRDTNAHVLCTTETKYAILQMASDNFLPSMNNILAVLSPTKLTYYKVHFASPDETLASLDEIFSHSFSTSAWNMCVIPIEESTPQILVQSIDCKLSLFQGDQCVFSMVPLRALQPGPIGYCQTTQTLFVANNGFLAAIKFSLMSSGSQKKINYDWSFNLGDTAIQMKVTEGSKPTTIVLCRRHVSAFNATGSVVWQIRLEAVGMAMCLYRSLLINNTQFNRLIVSTSDDTLLIFQDNKLVWNCNAQMSPVALLVCSYNKSYENTITMMAPDGKVVVGYLGTEPNLYRLPEDKVIVNYAERMEEYKRMEQKIKESDAAGGAIKRKEGIQMKLSIGEIGKRTIEPNAASNAPYCNLIVEFSEVQNVSKLHINILSECASPSKQVILNVGTSKSTASIEIPFYVGSKKSPTSNKVTIAAHCAFTQLTVTKSIDLPFKVLFEESQIDRNAKYKVTIDTAGSVMPLNKLFSEFESENPQAIGFSLHGSDKTVSVFAANKSNRYRIQSEHISLLQITSRELVKRIAESAPGIEIGGVIPFEYMRETLDEIQELQTKKKEDSKKIDCRTKEVRAIEALSLNSCKTGNMGNLPSLDALFDKSYRELLDAMDSYNSLTAKIENQKASLNSLFQLAADLSKLSKVDTILNGSFWANTQQSLRDRLRWAVKTDRGNEMTMIEKLCEHSPKELPKIREEEEEEEQQVTA.

The segment covering 722–733 has biased composition (basic and acidic residues); it reads EHSPKELPKIRE. Residues 722-744 are disordered; the sequence is EHSPKELPKIREEEEEEEQQVTA. The segment covering 734–744 has biased composition (acidic residues); it reads EEEEEEQQVTA.

As to quaternary structure, part of BBSome complex, that contains bbs-1, bbs-2, bbs-4, bbs-5, osm-12, bbs-8/ttc-8 and bbs-9. Interacts with bbs-1.

Its function is as follows. Component of the BBSome complex. The BBSome complex is thought to function as a coat complex required for sorting of specific membrane proteins to the primary cilia. The BBSome complex is required for ciliogenesis but is dispensable for centriolar satellite function. Required for proper BBSome complex assembly and its ciliary localization. Required for cilia biogenesis and both the assembly and movement of intraflagellar transport proteins along the ciliary axoneme. In ciliated sensory neurons, required for the sensation of nitric oxide and avoidance of NO-producing organisms like P.aeruginosa. The protein is Protein pthb1 homolog of Caenorhabditis elegans.